A 127-amino-acid polypeptide reads, in one-letter code: Large ribosomal subunit protein bL21c (127 aa).

Belongs to the bacterial ribosomal protein bL21 family. In terms of assembly, part of the 50S ribosomal subunit.

Its subcellular location is the plastid. The protein localises to the chloroplast. Functionally, this protein binds to 23S rRNA. This Adiantum capillus-veneris (Maidenhair fern) protein is Large ribosomal subunit protein bL21c.